The sequence spans 223 residues: Ribonuclease 3 (223 aa).

The RNase III domain maps to 4 to 127 (LENLQKLLGY…VMGAVYLEAG (124 aa)). Mg(2+) is bound at residue glutamate 40. Residue aspartate 44 is part of the active site. The Mg(2+) site is built by aspartate 113 and glutamate 116. The active site involves glutamate 116. The DRBM domain maps to 154-223 (DYKTALQEIT…AKIALEKMKK (70 aa)).

The protein belongs to the ribonuclease III family. In terms of assembly, homodimer. It depends on Mg(2+) as a cofactor.

The protein resides in the cytoplasm. It catalyses the reaction Endonucleolytic cleavage to 5'-phosphomonoester.. Its function is as follows. Digests double-stranded RNA. Involved in the processing of primary rRNA transcript to yield the immediate precursors to the large and small rRNAs (23S and 16S). Processes some mRNAs, and tRNAs when they are encoded in the rRNA operon. Processes pre-crRNA and tracrRNA of type II CRISPR loci if present in the organism. The chain is Ribonuclease 3 from Campylobacter curvus (strain 525.92).